A 1235-amino-acid polypeptide reads, in one-letter code: MNMLHLSDRNASLAPSGGEHSLPTGGAVCRDAMDILPVILRAPVALLLLLVVLPQLSVGAEANVTVKVLSATWNWYMPRKYVTAINAGFNASLKSRNWTVAGSVNVQVVYPSNLDLMPEDFIKKQLELETDQNKIVIVYGPLGDKSVMHSIPHLMNHRVVAFGLITGSTFIRQWNPYLYFLRADPAAETLVLIRYSLCQLRVLRLGFMYLQGVHYGDEEYALTVNVMSRMGYELHGVFTVMSPDGKPAPDAEFKEVFERFATALPQAIIVFGAPVDDTAKFLMMMAVDERIARSYILSPSSVQLSLIEMWQLALEAAGASFAPGQLLFTGTNPLAKDSQYTAIKRFQEVMSEYLKAHVGETNITEADYFLTHDLEGELMVYGWISGEVLSQALSNLEWLKDRATFVRSLYDQRRYVINDIVIGDYGGTCEGDAAKHGATCECNQGSKAVYVKEMLENGQKTSVRSGFTVLKASLCYTDSSELHGPLDGLVVFMKDDDIASKAAALWQKGTSHLVGKGDLGYSDRFFLHAFNTTIAEAANDLRRDQGERIVTAVFGPVTEAMLDTPNITFIDPLELKPRLNKFRRNVIHLSPTLEQQLYVLSSYLAGAGVGNVDAVICSNEADGIADFLRSSLTEFAVSLRSAVIREDGEDVGKYLPMSGTVFVIGLSVPDVKEIARKLEERNDLRVIVLFGEFSFLYDLFATALNNTAGAARLVFATSLPHWGDTETSSKTAQLFHDVEKDSRLWTPLSVLAFATGRLMRVILLHVEEMSPETLVNFFYTDSSIVSDDMRYGVFDDTKCVDTANKLSKNGCASNYGATQISVWSMARALNASIPPLTNPMTPSMTFRNSNAGRISGASLVGIIIGGALALFLVVALGVVPYFFLRNTVITICTKDDRPVTLIFTDIESSTALWAAHPEVMPDAVATHHRLIRTLISKYECYEVKTVGDSFMIASKSPFAAVQLAQELQLCFLHHDWGTNAIDESYQQFEQQRAEDDSDYTPPTARLDPKVYSRLWNGLRVRVGIHTGLCDIRRDEVTKGYDYYGRTSNMAARTESVANGGQVLMTHAAYMSLSAEERQQIDVTALGDVPLRGVPKPVEMYRLNAVPGRTFSVLRLELELLNDDEDQTTTSCSDHSSSRTDLSVAAQTIAASLQSLLGTFTPAQRQKALIPFCERWRVPLPQKVGNVWDDDGCQEVVRRVAAKVGRVMDFGTRKPSSSVTSWKGVEVSSQVEERLL.

Positions 1–20 (MNMLHLSDRNASLAPSGGEH) are disordered. Residues 1–32 (MNMLHLSDRNASLAPSGGEHSLPTGGAVCRDA) lie on the Cytoplasmic side of the membrane. A helical membrane pass occupies residues 33–53 (MDILPVILRAPVALLLLLVVL). The Extracellular portion of the chain corresponds to 54 to 858 (PQLSVGAEAN…SNAGRISGAS (805 aa)). N-linked (GlcNAc...) asparagine glycosylation is found at Asn63, Asn90, Asn97, Asn362, Asn531, Asn566, Asn705, and Asn830. A helical membrane pass occupies residues 859–879 (LVGIIIGGALALFLVVALGVV). At 880–1235 (PYFFLRNTVI…VSSQVEERLL (356 aa)) the chain is on the cytoplasmic side. In terms of domain architecture, Guanylate cyclase spans 900–1054 (TLIFTDIESS…RTSNMAARTE (155 aa)). Mg(2+) contacts are provided by Asp905 and Asp948.

The protein belongs to the adenylyl cyclase class-3 family. It depends on Mg(2+) as a cofactor.

The protein localises to the membrane. It carries out the reaction ATP = 3',5'-cyclic AMP + diphosphate. Its function is as follows. Could act as a receptor for an unknown ligand. The chain is Receptor-type adenylate cyclase ESAG 4 (ESAG4) from Trypanosoma brucei brucei.